The chain runs to 75 residues: MKAEIHPDYHTIKVVMTDGTEYLTRSTWGKEGDTLNLDIDPKSHPAWTGGNAQIMDRGGRVSRFQKKFSGFLKKD.

This sequence belongs to the bacterial ribosomal protein bL31 family. Type A subfamily. Part of the 50S ribosomal subunit.

Its function is as follows. Binds the 23S rRNA. This is Large ribosomal subunit protein bL31 from Bradyrhizobium diazoefficiens (strain JCM 10833 / BCRC 13528 / IAM 13628 / NBRC 14792 / USDA 110).